Consider the following 482-residue polypeptide: Glutamate--tRNA ligase 2 (482 aa).

The short motif at 16 to 26 is the 'HIGH' region element; the sequence is PSPTGYLHLGN. Residues Cys-113, Cys-115, Cys-140, and His-142 each coordinate Zn(2+). Positions 257 to 261 match the 'KMSKS' region motif; that stretch reads PLSKR. Lys-260 is a binding site for ATP.

The protein belongs to the class-I aminoacyl-tRNA synthetase family. Glutamate--tRNA ligase type 1 subfamily. As to quaternary structure, monomer. Requires Zn(2+) as cofactor.

It localises to the cytoplasm. It catalyses the reaction tRNA(Glu) + L-glutamate + ATP = L-glutamyl-tRNA(Glu) + AMP + diphosphate. Catalyzes the attachment of glutamate to tRNA(Glu) in a two-step reaction: glutamate is first activated by ATP to form Glu-AMP and then transferred to the acceptor end of tRNA(Glu). This Acidithiobacillus ferrooxidans (strain ATCC 53993 / BNL-5-31) (Leptospirillum ferrooxidans (ATCC 53993)) protein is Glutamate--tRNA ligase 2.